A 253-amino-acid chain; its full sequence is Indole-3-glycerol phosphate synthase (253 aa).

It belongs to the TrpC family.

The enzyme catalyses 1-(2-carboxyphenylamino)-1-deoxy-D-ribulose 5-phosphate + H(+) = (1S,2R)-1-C-(indol-3-yl)glycerol 3-phosphate + CO2 + H2O. Its pathway is amino-acid biosynthesis; L-tryptophan biosynthesis; L-tryptophan from chorismate: step 4/5. This Bacillus cereus (strain ATCC 10987 / NRS 248) protein is Indole-3-glycerol phosphate synthase.